The following is a 342-amino-acid chain: Phosphoribosylformylglycinamidine cyclo-ligase (342 aa).

This sequence belongs to the AIR synthase family.

It is found in the cytoplasm. It carries out the reaction 2-formamido-N(1)-(5-O-phospho-beta-D-ribosyl)acetamidine + ATP = 5-amino-1-(5-phospho-beta-D-ribosyl)imidazole + ADP + phosphate + H(+). It participates in purine metabolism; IMP biosynthesis via de novo pathway; 5-amino-1-(5-phospho-D-ribosyl)imidazole from N(2)-formyl-N(1)-(5-phospho-D-ribosyl)glycinamide: step 2/2. In Staphylococcus aureus (strain bovine RF122 / ET3-1), this protein is Phosphoribosylformylglycinamidine cyclo-ligase.